Consider the following 391-residue polypeptide: DNA replication and repair protein RecF (391 aa).

30 to 37 (GLNGQGKT) is an ATP binding site.

The protein belongs to the RecF family.

It is found in the cytoplasm. In terms of biological role, the RecF protein is involved in DNA metabolism; it is required for DNA replication and normal SOS inducibility. RecF binds preferentially to single-stranded, linear DNA. It also seems to bind ATP. This chain is DNA replication and repair protein RecF, found in Kineococcus radiotolerans (strain ATCC BAA-149 / DSM 14245 / SRS30216).